Reading from the N-terminus, the 232-residue chain is Small heat shock protein, chloroplastic (232 aa).

The span at 1-25 (MAQSVSLSTIASPILSQKPGSSVKS) shows a compositional bias: polar residues. Disordered stretches follow at residues 1–35 (MAQS…SFPL) and 48–81 (RAQA…RKPR). The transit peptide at 1 to 46 (MAQSVSLSTIASPILSQKPGSSVKSTPPCMASFPLRRQLPRLGLRN) directs the protein to the chloroplast. The segment covering 55–78 (GDNKDNSVEVHRVNKDDQGTAVER) has biased composition (basic and acidic residues). The sHSP domain maps to 124–232 (IGGGEIRVPW…ERTVIDVQIQ (109 aa)).

The protein belongs to the small heat shock protein (HSP20) family.

It is found in the plastid. The protein resides in the chloroplast. This is Small heat shock protein, chloroplastic (HSP21) from Pisum sativum (Garden pea).